The chain runs to 166 residues: EndA-like protein (166 aa).

It belongs to the tRNA-intron endonuclease family. Archaeal short subfamily.

This is EndA-like protein from Methanopyrus kandleri (strain AV19 / DSM 6324 / JCM 9639 / NBRC 100938).